A 474-amino-acid polypeptide reads, in one-letter code: Probable glycine dehydrogenase (decarboxylating) subunit 2 (474 aa).

N6-(pyridoxal phosphate)lysine is present on lysine 266.

Belongs to the GcvP family. C-terminal subunit subfamily. As to quaternary structure, the glycine cleavage system is composed of four proteins: P, T, L and H. In this organism, the P 'protein' is a heterodimer of two subunits. Requires pyridoxal 5'-phosphate as cofactor.

The enzyme catalyses N(6)-[(R)-lipoyl]-L-lysyl-[glycine-cleavage complex H protein] + glycine + H(+) = N(6)-[(R)-S(8)-aminomethyldihydrolipoyl]-L-lysyl-[glycine-cleavage complex H protein] + CO2. The glycine cleavage system catalyzes the degradation of glycine. The P protein binds the alpha-amino group of glycine through its pyridoxal phosphate cofactor; CO(2) is released and the remaining methylamine moiety is then transferred to the lipoamide cofactor of the H protein. The sequence is that of Probable glycine dehydrogenase (decarboxylating) subunit 2 from Thermus thermophilus (strain ATCC 27634 / DSM 579 / HB8).